A 365-amino-acid polypeptide reads, in one-letter code: Flagellar P-ring protein (365 aa).

Positions 1–21 are cleaved as a signal peptide; the sequence is MKSLRLVALFCCLLPLGMAHA.

Belongs to the FlgI family. In terms of assembly, the basal body constitutes a major portion of the flagellar organelle and consists of four rings (L,P,S, and M) mounted on a central rod.

It localises to the periplasm. The protein localises to the bacterial flagellum basal body. Its function is as follows. Assembles around the rod to form the L-ring and probably protects the motor/basal body from shearing forces during rotation. The sequence is that of Flagellar P-ring protein from Aeromonas hydrophila subsp. hydrophila (strain ATCC 7966 / DSM 30187 / BCRC 13018 / CCUG 14551 / JCM 1027 / KCTC 2358 / NCIMB 9240 / NCTC 8049).